Here is a 124-residue protein sequence, read N- to C-terminus: UPF0382 membrane protein HI_1073 (124 aa).

3 helical membrane passes run 6-26 (LTLVALSGFFCVALGAFAAHG), 70-90 (SMSSWLIGILLFSGSLYALAF), and 95-115 (VIVWITPIGGTLFLIGWISLA).

Belongs to the UPF0382 family.

Its subcellular location is the cell membrane. In Haemophilus influenzae (strain ATCC 51907 / DSM 11121 / KW20 / Rd), this protein is UPF0382 membrane protein HI_1073.